Consider the following 137-residue polypeptide: Large ribosomal subunit protein uL16 (137 aa).

This sequence belongs to the universal ribosomal protein uL16 family. In terms of assembly, part of the 50S ribosomal subunit.

Its function is as follows. Binds 23S rRNA and is also seen to make contacts with the A and possibly P site tRNAs. This chain is Large ribosomal subunit protein uL16, found in Bartonella bacilliformis (strain ATCC 35685 / KC583 / Herrer 020/F12,63).